We begin with the raw amino-acid sequence, 930 residues long: MKPPRPVRTCSKVLVLLSLLAIHQTTTAEKNGIDIYSLTVDSRVSSRFAHTVVTSRVVNRANTVQEATFQMELPKKAFITNFSMIIDGMTYPGIIKEKAEAQAQYSAAVAKGKSAGLVKATGRNMEQFQVSVSVAPNAKITFELVYEELLKRRLGVYELLLKVRPQQLVKHLQMDIHIFEPQGISFLETESTFMTNQLVDALTTWQNKTKAHIRFKPTLSQQQKSPEQQETVLDGNLIIRYDVDRAISGGSIQIENGYFVHYFAPEGLTTMPKNVVFVIDKSGSMSGRKIQQTREALIKILDDLSPRDQFNLIVFSTEATQWRPSLVPASAENVNKARSFAAGIQALGGTNINDAMLMAVQLLDSSNQEERLPEGSVSLIILLTDGDPTVGETNPRSIQNNVREAVSGRYSLFCLGFGFDVSYAFLEKLALDNGGLARRIHEDSDSALQLQDFYQEVANPLLTAVTFEYPSNAVEEVTQNNFRLLFKGSEMVVAGKLQDRGPDVLTATVSGKLPTQNITFQTESSVAEQEAEFQSPKYIFHNFMERLWAYLTIQQLLEQTVSASDADQQALRNQALNLSLAYSFVTPLTSMVVTKPDDQEQSQVAEKPMEGESRNRNVHSGSTFFKYYLQGAKIPKPEASFSPRRGWNRQAGAAGSRMNFRPGVLSSRQLGLPGPPDVPDHAAYHPFRRLAILPASAPPATSNPDPAVSRVMNMKIEETTMTTQTPAPIQAPSAILPLPGQSVERLCVDPRHRQGPVNLLSDPEQGVEVTGQYEREKAGFSWIEVTFKNPLVWVHASPEHVVVTRNRRSSAYKWKETLFSVMPGLKMTMDKTGLLLLSDPDKVTIGLLFWDGRGEGLRLLLRDTDRFSSHVGGTLGQFYQEVLWGSPAASDDGRRTLRVQGNDHSATRERRLDYQEGPPGVEISCWSVEL.

The first 28 residues, 1–28 (MKPPRPVRTCSKVLVLLSLLAIHQTTTA), serve as a signal peptide directing secretion. The region spanning 29 to 148 (EKNGIDIYSL…KITFELVYEE (120 aa)) is the VIT domain. N-linked (GlcNAc...) asparagine glycans are attached at residues N81 and N207. Residues 272 to 432 (PKNVVFVIDK…YAFLEKLALD (161 aa)) enclose the VWFA domain. N-linked (GlcNAc...) asparagine; atypical glycosylation is present at N274. N517 and N577 each carry an N-linked (GlcNAc...) asparagine glycan. Residues 595–618 (KPDDQEQSQVAEKPMEGESRNRNV) are disordered. The proline-rich (PRR) potential bioactive peptide stretch occupies residues 658–688 (MNFRPGVLSSRQLGLPGPPDVPDHAAYHPFR). Positions 662 to 688 (PGVLSSRQLGLPGPPDVPDHAAYHPFR) are cleaved as a propeptide — potentially active peptide. 3 O-linked (GalNAc...) threonine glycosylation sites follow: T719, T720, and T722. Residues 719-725 (TTMTTQT) form an O-glycosylated at three sites region. Cysteines 747 and 925 form a disulfide.

This sequence belongs to the ITIH family. In terms of assembly, interacts (via C-terminus) with DNAJC1 (via SANT 2 domain); this interaction protects ITIH4 against cleavage by kallikrein in vitro. Cleaved by plasma kallikrein to yield 100 kDa and 35 kDa fragments, and the resulting 100 kDa fragment is further converted to a 70 kDa fragment. In terms of processing, N- and O-glycosylated. In urine, O-linked glycosylation on threonine residues in the region from Thr-719 to Thr-725 consists of core 1 or possibly core 8 glycans. Mainly Hex(HexNAc)(2), but also some Hex(3)(HexNAc)(3). N-glycosylated but not O-glycosylated in plasma. In terms of tissue distribution, liver specific.

Its subcellular location is the secreted. Functionally, type II acute-phase protein (APP) involved in inflammatory responses to trauma. May also play a role in liver development or regeneration. This Homo sapiens (Human) protein is Inter-alpha-trypsin inhibitor heavy chain H4 (ITIH4).